The sequence spans 492 residues: Cobyric acid synthase (492 aa).

One can recognise a GATase cobBQ-type domain in the interval 252-440 (QLNVVVPVLT…LHGIFEQTEA (189 aa)). The Nucleophile role is filled by cysteine 333. The active site involves histidine 432.

It belongs to the CobB/CobQ family. CobQ subfamily.

The protein operates within cofactor biosynthesis; adenosylcobalamin biosynthesis. Its function is as follows. Catalyzes amidations at positions B, D, E, and G on adenosylcobyrinic A,C-diamide. NH(2) groups are provided by glutamine, and one molecule of ATP is hydrogenolyzed for each amidation. The chain is Cobyric acid synthase from Photobacterium profundum (strain SS9).